We begin with the raw amino-acid sequence, 119 residues long: Translation initiation factor 1A (119 aa).

Positions 1 to 24 are disordered; that stretch reads MSEDDVDNSVKDFESGEENEESIG. An S1-like domain is found at 24-98; it reads GRVILPNKKK…EKADVVYRYT (75 aa).

This sequence belongs to the eIF-1A family.

Seems to be required for maximal rate of protein biosynthesis. Enhances ribosome dissociation into subunits and stabilizes the binding of the initiator Met-tRNA(I) to 40 S ribosomal subunits. In Thermoplasma acidophilum (strain ATCC 25905 / DSM 1728 / JCM 9062 / NBRC 15155 / AMRC-C165), this protein is Translation initiation factor 1A (eIF1A).